The sequence spans 562 residues: Exonuclease subunit 2 (562 aa).

An ATP-binding site is contributed by Gly36–Ser43.

It to phage T5 protein D13 and to yeast RAD52. In terms of assembly, consists of two subunits: Gp47 and Gp46.

Its function is as follows. Exonuclease involved in phage DNA recombination, replication, and repair. This Escherichia phage RB69 (Bacteriophage RB69) protein is Exonuclease subunit 2 (46).